The sequence spans 165 residues: Protein SprT (165 aa).

The SprT-like domain occupies 20 to 163; it reads EKLTQANLKL…RCVHCGEQLV (144 aa). H78 provides a ligand contact to Zn(2+). E79 is a catalytic residue. H82 provides a ligand contact to Zn(2+).

Belongs to the SprT family. It depends on Zn(2+) as a cofactor.

Its subcellular location is the cytoplasm. This chain is Protein SprT, found in Escherichia coli O139:H28 (strain E24377A / ETEC).